Here is a 609-residue protein sequence, read N- to C-terminus: Autophagy-related protein 22-1 (609 aa).

4 helical membrane-spanning segments follow: residues 35 to 55, 117 to 137, 151 to 171, and 176 to 196; these read YGWA…PITL, TASF…ILII, LLLM…LGVV, and MVGA…FVLL. Basic and acidic residues predominate over residues 214–231; sequence AREPRPALDDSRAQEGHS. The tract at residues 214-240 is disordered; that stretch reads AREPRPALDDSRAQEGHSDTTNGIEHG. N-linked (GlcNAc...) asparagine glycosylation occurs at Asn244. The helical transmembrane segment at 287–307 threads the bilayer; the sequence is IGIGYIGAIILQIVCILVVIA. Asn309 carries an N-linked (GlcNAc...) asparagine glycan. A run of 3 helical transmembrane segments spans residues 317–337, 381–401, and 415–435; these read LVLF…ALWL, ILLF…VSGT, and AALG…AFSW. An N-linked (GlcNAc...) asparagine glycan is attached at Asn443. 4 consecutive transmembrane segments (helical) span residues 450–470, 477–497, 522–542, and 552–572; these read IIAC…GFIP, FLGL…GLVM, ALYA…VGII, and AFVF…LVDV.

It belongs to the ATG22 family.

The protein localises to the vacuole membrane. Functionally, vacuolar effluxer which mediate the efflux of amino acids resulting from autophagic degradation. The release of autophagic amino acids allows the maintenance of protein synthesis and viability during nitrogen starvation. The chain is Autophagy-related protein 22-1 (atg22-1) from Aspergillus fumigatus (strain ATCC MYA-4609 / CBS 101355 / FGSC A1100 / Af293) (Neosartorya fumigata).